Reading from the N-terminus, the 559-residue chain is AP-4 complex accessory subunit tepsin (559 aa).

An ENTH domain is found at 2-135 (LDRLAFLQQL…FSESIPSPSH (134 aa)). Disordered stretches follow at residues 131-157 (PSPSHTVSAKERSQSGMGSQASSAPAL), 214-290 (AIPS…ESLD), and 472-491 (PNGAANQKNPNGSTEKSDPA). 2 stretches are compositionally biased toward low complexity: residues 144 to 154 (QSGMGSQASSA) and 266 to 281 (SRSSDVGSKSGSDGQS). Residues 472-485 (PNGAANQKNPNGST) show a composition bias toward polar residues.

It localises to the golgi apparatus. It is found in the trans-Golgi network membrane. The protein resides in the cytoplasmic vesicle. The protein localises to the cytoplasm. Its subcellular location is the cytosol. Functionally, may play a role in vesicular trafficking of proteins at the trans-Golgi network. This is AP-4 complex accessory subunit tepsin from Xenopus laevis (African clawed frog).